Here is a 439-residue protein sequence, read N- to C-terminus: Sex-determination protein fem-3 (439 aa).

Residues 21–45 (RRLKRKANDDDDDDETVRERVDDAE) form a disordered region.

As to quaternary structure, component of a complex containing fem-1, fem-2 and fem-3. Interacts with fem-1 and fem-2 (via N-terminus). Part of a E3 ubiquitin-protein ligase complex, at least composed of cul-2, elc-1, tra-1, fem-1, fem-2 and fem-3; mediates the ubiquitination and subsequent proteasomal degradation of tra-1. Interacts with tra-1. Interacts with sel-10. Interacts with tra-2.

Its function is as follows. Required for male development. In XO (male) animals, fem-3 directs male differentiation in all tissues. In XX (hermaphrodite) animals, it specifies the first 80 or so germ cells to be sperm. Negatively regulates male development when bound to tra-2. Together with fem-2 associates with the CBC(fem-1) E3 ubiquitin-protein ligase complex which mediates the ubiquitination and subsequent proteasomal degradation of tra-1. In Caenorhabditis remanei (Caenorhabditis vulgaris), this protein is Sex-determination protein fem-3.